The chain runs to 478 residues: JmjC domain-containing histone demethylation protein 1 (478 aa).

The PHD-type zinc finger occupies 6–70 (VKCHFCKKDD…HVESFKCTLH (65 aa)). The JmjC domain occupies 242–401 (SHVESFKDGI…TQLNVVEIEH (160 aa)). Thr294 provides a ligand contact to substrate. Residues His297 and Asp299 each contribute to the Fe cation site. Lys314 provides a ligand contact to substrate. Fe cation is bound at residue His369.

It belongs to the JHDM1 histone demethylase family. Requires Fe(2+) as cofactor.

The protein resides in the nucleus. The enzyme catalyses N(6),N(6)-dimethyl-L-lysyl(36)-[histone H3] + 2 2-oxoglutarate + 2 O2 = L-lysyl(36)-[histone H3] + 2 formaldehyde + 2 succinate + 2 CO2. Functionally, histone demethylase that specifically demethylates 'Lys-36' of histone H3, thereby playing a central role in histone code. This Kluyveromyces lactis (strain ATCC 8585 / CBS 2359 / DSM 70799 / NBRC 1267 / NRRL Y-1140 / WM37) (Yeast) protein is JmjC domain-containing histone demethylation protein 1 (JHD1).